The chain runs to 420 residues: LanC-like protein 3 homolog (420 aa).

Belongs to the LanC-like protein family.

This Drosophila pseudoobscura pseudoobscura (Fruit fly) protein is LanC-like protein 3 homolog.